The following is a 315-amino-acid chain: 4-hydroxy-3-methylbut-2-enyl diphosphate reductase (315 aa).

Cys12 lines the [4Fe-4S] cluster pocket. (2E)-4-hydroxy-3-methylbut-2-enyl diphosphate is bound by residues His41 and His74. Dimethylallyl diphosphate-binding residues include His41 and His74. The isopentenyl diphosphate site is built by His41 and His74. Cys96 provides a ligand contact to [4Fe-4S] cluster. Position 124 (His124) interacts with (2E)-4-hydroxy-3-methylbut-2-enyl diphosphate. His124 is a dimethylallyl diphosphate binding site. Position 124 (His124) interacts with isopentenyl diphosphate. Glu126 serves as the catalytic Proton donor. Thr168 contacts (2E)-4-hydroxy-3-methylbut-2-enyl diphosphate. A [4Fe-4S] cluster-binding site is contributed by Cys198. (2E)-4-hydroxy-3-methylbut-2-enyl diphosphate is bound by residues Ser226, Ser227, Asn228, and Ser270. Residues Ser226, Ser227, Asn228, and Ser270 each coordinate dimethylallyl diphosphate. 4 residues coordinate isopentenyl diphosphate: Ser226, Ser227, Asn228, and Ser270.

This sequence belongs to the IspH family. Requires [4Fe-4S] cluster as cofactor.

The catalysed reaction is isopentenyl diphosphate + 2 oxidized [2Fe-2S]-[ferredoxin] + H2O = (2E)-4-hydroxy-3-methylbut-2-enyl diphosphate + 2 reduced [2Fe-2S]-[ferredoxin] + 2 H(+). It carries out the reaction dimethylallyl diphosphate + 2 oxidized [2Fe-2S]-[ferredoxin] + H2O = (2E)-4-hydroxy-3-methylbut-2-enyl diphosphate + 2 reduced [2Fe-2S]-[ferredoxin] + 2 H(+). It functions in the pathway isoprenoid biosynthesis; dimethylallyl diphosphate biosynthesis; dimethylallyl diphosphate from (2E)-4-hydroxy-3-methylbutenyl diphosphate: step 1/1. The protein operates within isoprenoid biosynthesis; isopentenyl diphosphate biosynthesis via DXP pathway; isopentenyl diphosphate from 1-deoxy-D-xylulose 5-phosphate: step 6/6. In terms of biological role, catalyzes the conversion of 1-hydroxy-2-methyl-2-(E)-butenyl 4-diphosphate (HMBPP) into a mixture of isopentenyl diphosphate (IPP) and dimethylallyl diphosphate (DMAPP). Acts in the terminal step of the DOXP/MEP pathway for isoprenoid precursor biosynthesis. This is 4-hydroxy-3-methylbut-2-enyl diphosphate reductase from Pseudomonas fluorescens (strain ATCC BAA-477 / NRRL B-23932 / Pf-5).